A 562-amino-acid chain; its full sequence is NAD-dependent malic enzyme (562 aa).

Y101 acts as the Proton donor in catalysis. Residue R154 participates in NAD(+) binding. The Proton acceptor role is filled by K172. Residues E243, D244, and D267 each coordinate a divalent metal cation. Positions 267 and 415 each coordinate NAD(+).

Belongs to the malic enzymes family. Homotetramer. It depends on Mg(2+) as a cofactor. The cofactor is Mn(2+).

The enzyme catalyses (S)-malate + NAD(+) = pyruvate + CO2 + NADH. It catalyses the reaction oxaloacetate + H(+) = pyruvate + CO2. This Shewanella sediminis (strain HAW-EB3) protein is NAD-dependent malic enzyme.